Reading from the N-terminus, the 335-residue chain is tRNA N6-adenosine threonylcarbamoyltransferase (335 aa).

A divalent metal cation is bound by residues H109, H113, and Y130. Residues 130 to 134 (YVSGG), D162, G177, E181, and N266 each bind substrate. D294 lines the a divalent metal cation pocket.

The protein belongs to the KAE1 / TsaD family. As to quaternary structure, component of the EKC/KEOPS complex composed of at least GON7, TP53RK, TPRKB, OSGEP and LAGE3; the whole complex dimerizes. Interacts with PRAME. Requires a divalent metal cation as cofactor. In terms of tissue distribution, widely expressed at low level. Expressed in heart, placenta, liver, kidney, lung, brain, skeletal muscle and pancreas.

It is found in the cytoplasm. It localises to the nucleus. It catalyses the reaction L-threonylcarbamoyladenylate + adenosine(37) in tRNA = N(6)-L-threonylcarbamoyladenosine(37) in tRNA + AMP + H(+). Component of the EKC/KEOPS complex that is required for the formation of a threonylcarbamoyl group on adenosine at position 37 (t(6)A37) in tRNAs that read codons beginning with adenine. The complex is probably involved in the transfer of the threonylcarbamoyl moiety of threonylcarbamoyl-AMP (TC-AMP) to the N6 group of A37. OSGEP likely plays a direct catalytic role in this reaction, but requires other protein(s) of the complex to fulfill this activity. The sequence is that of tRNA N6-adenosine threonylcarbamoyltransferase from Homo sapiens (Human).